Here is a 162-residue protein sequence, read N- to C-terminus: Xanthine-guanine phosphoribosyltransferase (162 aa).

5-phospho-alpha-D-ribose 1-diphosphate-binding positions include 41 to 42 and 92 to 100; these read RG and DDLVDTGNT. A Mg(2+)-binding site is contributed by Asp93. 2 residues coordinate guanine: Asp96 and Ile139. Asp96 and Ile139 together coordinate xanthine. Residues 96-100 and 138-139 contribute to the GMP site; these read DTGNT and WI.

It belongs to the purine/pyrimidine phosphoribosyltransferase family. XGPT subfamily. Homotetramer. The cofactor is Mg(2+).

It is found in the cell inner membrane. The catalysed reaction is GMP + diphosphate = guanine + 5-phospho-alpha-D-ribose 1-diphosphate. It catalyses the reaction XMP + diphosphate = xanthine + 5-phospho-alpha-D-ribose 1-diphosphate. The enzyme catalyses IMP + diphosphate = hypoxanthine + 5-phospho-alpha-D-ribose 1-diphosphate. Its pathway is purine metabolism; GMP biosynthesis via salvage pathway; GMP from guanine: step 1/1. It functions in the pathway purine metabolism; XMP biosynthesis via salvage pathway; XMP from xanthine: step 1/1. Its function is as follows. Purine salvage pathway enzyme that catalyzes the transfer of the ribosyl-5-phosphate group from 5-phospho-alpha-D-ribose 1-diphosphate (PRPP) to the N9 position of the 6-oxopurines guanine and xanthine to form the corresponding ribonucleotides GMP (guanosine 5'-monophosphate) and XMP (xanthosine 5'-monophosphate), with the release of PPi. To a lesser extent, also acts on hypoxanthine. The chain is Xanthine-guanine phosphoribosyltransferase from Chromohalobacter salexigens (strain ATCC BAA-138 / DSM 3043 / CIP 106854 / NCIMB 13768 / 1H11).